A 94-amino-acid chain; its full sequence is Co-chaperonin GroES (94 aa).

Belongs to the GroES chaperonin family. Heptamer of 7 subunits arranged in a ring. Interacts with the chaperonin GroEL.

The protein localises to the cytoplasm. Its function is as follows. Together with the chaperonin GroEL, plays an essential role in assisting protein folding. The GroEL-GroES system forms a nano-cage that allows encapsulation of the non-native substrate proteins and provides a physical environment optimized to promote and accelerate protein folding. GroES binds to the apical surface of the GroEL ring, thereby capping the opening of the GroEL channel. The protein is Co-chaperonin GroES of Acetivibrio thermocellus (strain ATCC 27405 / DSM 1237 / JCM 9322 / NBRC 103400 / NCIMB 10682 / NRRL B-4536 / VPI 7372) (Clostridium thermocellum).